The following is a 619-amino-acid chain: Teichoic acid poly(ribitol-phosphate) polymerase (619 aa).

This sequence belongs to the CDP-glycerol glycerophosphotransferase family.

The protein resides in the cell membrane. The enzyme catalyses 4-O-[1-D-ribitylphospho-(2R)-1-glycerylphospho]-N-acetyl-beta-D-mannosaminyl-(1-&gt;4)-N-acetyl-alpha-D-glucosaminyl di-trans,octa-cis-undecaprenyl diphosphate + n CDP-L-ribitol = 4-O-[(D-ribitylphospho)(n)-D-ribitylphospho-(2R)-glycerylphospho]-N-acetyl-beta-D-mannosaminyl-(1-&gt;4)-N-acetyl-alpha-D-glucosaminyl di-trans,octa-cis-undecaprenyl diphosphate + n CMP + n H(+). The protein operates within cell wall biogenesis; poly(ribitol phosphate) teichoic acid biosynthesis. Responsible for the polymerization of the main chain of the major teichoic acid by sequential transfer of ribitol phosphate units from CDP-ribitol to the glycerol phosphate attached to the disaccharide linkage unit. Synthesizes polymers of up to 40 ribitol phosphate units in length. This chain is Teichoic acid poly(ribitol-phosphate) polymerase (tarL), found in Bacillus spizizenii (strain ATCC 23059 / NRRL B-14472 / W23) (Bacillus subtilis subsp. spizizenii).